Here is a 454-residue protein sequence, read N- to C-terminus: Phosphoglucosamine mutase (454 aa).

S104 serves as the catalytic Phosphoserine intermediate. Mg(2+) contacts are provided by S104, D247, D249, and D251. S104 is subject to Phosphoserine.

This sequence belongs to the phosphohexose mutase family. Requires Mg(2+) as cofactor. Post-translationally, activated by phosphorylation.

It carries out the reaction alpha-D-glucosamine 1-phosphate = D-glucosamine 6-phosphate. In terms of biological role, catalyzes the conversion of glucosamine-6-phosphate to glucosamine-1-phosphate. The sequence is that of Phosphoglucosamine mutase from Bifidobacterium animalis subsp. lactis (strain AD011).